The primary structure comprises 156 residues: MAPKKDEKPATRAATQEAGVEATAKAEAKPKAEKAAKKAKKEPAKKAAKEPKGDGEKKDKKKKSAVETYKLYIYKVLKQVHPDTGISSKAMSIMNSFINDIFEKVATEASKLSRYNKKPTVTSREIQTAVRLVLPGELAKHAVSEGTKAVTKFTSG.

2 stretches are compositionally biased toward basic and acidic residues: residues 1 to 10 (MAPKKDEKPA) and 24 to 58 (AKAE…GEKK). The disordered stretch occupies residues 1-63 (MAPKKDEKPA…DGEKKDKKKK (63 aa)). Residues K40 and K41 each carry the N6-acetyllysine modification. K152 is covalently cross-linked (Glycyl lysine isopeptide (Lys-Gly) (interchain with G-Cter in ubiquitin)).

This sequence belongs to the histone H2B family. The nucleosome is a histone octamer containing two molecules each of H2A, H2B, H3 and H4 assembled in one H3-H4 heterotetramer and two H2A-H2B heterodimers. The octamer wraps approximately 147 bp of DNA. In terms of processing, the N-terminus is blocked. Can be acetylated to form H2BK33ac and H2BK34ac. Acetylated mainly on the ubiquitinated form. Post-translationally, monoubiquitinated to form H2BK143ub1; which is increased during the light period and may give a specific tag for epigenetic transcriptional activation.

It is found in the nucleus. Its subcellular location is the chromosome. Its function is as follows. Core component of nucleosome. Nucleosomes wrap and compact DNA into chromatin, limiting DNA accessibility to the cellular machineries which require DNA as a template. Histones thereby play a central role in transcription regulation, DNA repair, DNA replication and chromosomal stability. DNA accessibility is regulated via a complex set of post-translational modifications of histones, also called histone code, and nucleosome remodeling. This chain is Histone H2B.2, found in Chlamydomonas reinhardtii (Chlamydomonas smithii).